The primary structure comprises 466 residues: Probable sensor protein PcoS (466 aa).

At 1-10 (MRFKISLTTR) the chain is on the cytoplasmic side. The helical transmembrane segment at 11–31 (LSLIFSAVMLTVWWLSSFILI) threads the bilayer. Topologically, residues 32-171 (STLNDYFDNQ…HTLLMDKLST (140 aa)) are periplasmic. Residues 172-192 (WLFWFNIGLVFISVFLGWLTT) traverse the membrane as a helical segment. In terms of domain architecture, HAMP spans 193–246 (RIGLKPLREMTSLASSMTVHSLDQRLNPDLAPPEISETMQEFNNMFDRLEGAFR). Over 193 to 466 (RIGLKPLREM…IVFKVRLLMD (274 aa)) the chain is Cytoplasmic. Residues 254–466 (DIAHELRTPV…IVFKVRLLMD (213 aa)) enclose the Histidine kinase domain. Histidine 257 carries the phosphohistidine; by autocatalysis modification.

The protein localises to the cell inner membrane. The enzyme catalyses ATP + protein L-histidine = ADP + protein N-phospho-L-histidine.. Functionally, probable member of a two-component regulatory system PcoS/PcoR. May activate PcoR by phosphorylation. The protein is Probable sensor protein PcoS (pcoS) of Escherichia coli.